The chain runs to 290 residues: L-proline cis-3-hydroxylase 2 (290 aa).

His107, Asp109, and His158 together coordinate Fe cation. A 2-oxoglutarate-binding site is contributed by Arg168.

This sequence belongs to the L-proline cis-4-/cis-3-hydroxylase family. Homodimer. Fe(2+) is required as a cofactor.

The enzyme catalyses L-proline + 2-oxoglutarate + O2 = cis-3-hydroxy-L-proline + succinate + CO2. Inhibited by metal ions such as Co(2+), Zn(2+), Ni(2+) or Cu(2+). Is also inhibited by EDTA in vitro. Dioxygenase that catalyzes the 2-oxoglutarate-dependent selective hydroxylation of free L-proline to cis-3-hydroxy-L-proline (cis-3-Hyp). The protein is L-proline cis-3-hydroxylase 2 of Streptomyces sp.